A 281-amino-acid chain; its full sequence is Bifunctional protein FolD (281 aa).

NADP(+) is bound by residues 161–163 (GRS), Ser-186, and Ile-227.

The protein belongs to the tetrahydrofolate dehydrogenase/cyclohydrolase family. As to quaternary structure, homodimer.

It carries out the reaction (6R)-5,10-methylene-5,6,7,8-tetrahydrofolate + NADP(+) = (6R)-5,10-methenyltetrahydrofolate + NADPH. The enzyme catalyses (6R)-5,10-methenyltetrahydrofolate + H2O = (6R)-10-formyltetrahydrofolate + H(+). It functions in the pathway one-carbon metabolism; tetrahydrofolate interconversion. Catalyzes the oxidation of 5,10-methylenetetrahydrofolate to 5,10-methenyltetrahydrofolate and then the hydrolysis of 5,10-methenyltetrahydrofolate to 10-formyltetrahydrofolate. This Brachyspira hyodysenteriae (strain ATCC 49526 / WA1) protein is Bifunctional protein FolD.